Consider the following 452-residue polypeptide: Putative tripartite motif-containing protein 49B (452 aa).

The segment at 15–56 (CPICMNYFIDPVTIDCGHSFCRPCFYLNWKDSPFLVQCSECT) adopts an RING-type zinc-finger fold. Residues 88 to 129 (SEEQMCGTHRETKKMFCEVDRSLLCLLCSSSQEHRDHRHCPI) form a B box-type zinc finger. Residues C93, H96, C115, and H121 each contribute to the Zn(2+) site. Residues 269 to 452 (ELSAGPITGL…LRPIFCCIHF (184 aa)) enclose the B30.2/SPRY domain.

Belongs to the TRIM/RBCC family.

The polypeptide is Putative tripartite motif-containing protein 49B (TRIM49B) (Homo sapiens (Human)).